Consider the following 138-residue polypeptide: MNTETKSLPAWLDKVRWDDNGLVPVIAQEASTNDVLMFAWMNREALAKTVETRRAVYYSRSRKRLWFKGEESGHVQHLHEVRLDCDEDVVLLKVEQVSGIACHTGRHSCFFQKFEGNVDSGDWVAVEPVLKDPEHIYK.

Mg(2+) is bound at residue Asp-84. Cys-85 lines the Zn(2+) pocket. Mg(2+)-binding residues include Asp-86 and Asp-88. Zn(2+) contacts are provided by Cys-102 and Cys-109.

It belongs to the PRA-CH family. As to quaternary structure, homodimer. The cofactor is Mg(2+). It depends on Zn(2+) as a cofactor.

The protein localises to the cytoplasm. It carries out the reaction 1-(5-phospho-beta-D-ribosyl)-5'-AMP + H2O = 1-(5-phospho-beta-D-ribosyl)-5-[(5-phospho-beta-D-ribosylamino)methylideneamino]imidazole-4-carboxamide. It functions in the pathway amino-acid biosynthesis; L-histidine biosynthesis; L-histidine from 5-phospho-alpha-D-ribose 1-diphosphate: step 3/9. Its function is as follows. Catalyzes the hydrolysis of the adenine ring of phosphoribosyl-AMP. The chain is Phosphoribosyl-AMP cyclohydrolase from Burkholderia cenocepacia (strain ATCC BAA-245 / DSM 16553 / LMG 16656 / NCTC 13227 / J2315 / CF5610) (Burkholderia cepacia (strain J2315)).